Here is a 237-residue protein sequence, read N- to C-terminus: uncharacterized protein (237 aa).

Positions M1–A28 are cleaved as a signal peptide.

This is an uncharacterized protein from Sinorhizobium fredii (strain NBRC 101917 / NGR234).